Here is a 131-residue protein sequence, read N- to C-terminus: MSITYTTVGELKVGSYVVIDGEPCRVVEVTKAKTGKHGSAKANVVAIGVFSGAKKTLMAPVDQQVEVPIIEKHIGQIIADMGNKIQVMDLESYETFEIEKPTEDELASKIKPNAELEYWEIMGRRKIVRVK.

A Hypusine modification is found at Lys-36.

Belongs to the eIF-5A family.

The protein localises to the cytoplasm. Functionally, functions by promoting the formation of the first peptide bond. This chain is Translation initiation factor 5A, found in Saccharolobus solfataricus (strain ATCC 35092 / DSM 1617 / JCM 11322 / P2) (Sulfolobus solfataricus).